A 122-amino-acid polypeptide reads, in one-letter code: Large ribosomal subunit protein bL12 (122 aa).

Belongs to the bacterial ribosomal protein bL12 family. Homodimer. Part of the ribosomal stalk of the 50S ribosomal subunit. Forms a multimeric L10(L12)X complex, where L10 forms an elongated spine to which 2 to 4 L12 dimers bind in a sequential fashion. Binds GTP-bound translation factors.

In terms of biological role, forms part of the ribosomal stalk which helps the ribosome interact with GTP-bound translation factors. Is thus essential for accurate translation. This is Large ribosomal subunit protein bL12 from Yersinia pseudotuberculosis serotype O:1b (strain IP 31758).